The primary structure comprises 295 residues: Probable palmitoyltransferase ZDHHC24 (295 aa).

At 1-20 the chain is on the cytoplasmic side; sequence MTSFMSRVWCKVESTGRQLP. Residues 21 to 41 form a helical membrane-spanning segment; the sequence is IVLNAVLVFSITAEVSYLVLV. At 42–60 the chain is on the extracellular side; sequence EAPFEPEQKKTDWSTIWTG. A helical membrane pass occupies residues 61 to 81; it reads LHLFAQYFMLGNITWNASLFV. Over 82–151 the chain is Cytoplasmic; the sequence is KTNPSIRGVF…HNYRYFLTCL (70 aa). One can recognise a DHHC domain in the interval 102–152; sequence RYCYNCETHTPPRCSHCYDCNVCVLRRDHHCVFFGQCVGFHNYRYFLTCLL. C132 (S-palmitoyl cysteine intermediate) is an active-site residue. The chain crosses the membrane as a helical span at residues 152-172; that stretch reads LFMWAGLLYAVVMNAEVFIFI. Residues 173–176 are Extracellular-facing; the sequence is LKEG. The helical transmembrane segment at 177-197 threads the bilayer; the sequence is VTFHSVMLLLVPWIMLVSGQV. At 198 to 203 the chain is on the cytoplasmic side; sequence TTRAFA. A helical transmembrane segment spans residues 204-224; the sequence is FAFIADTCVVGFLLVAAFLFF. Residues 225–295 are Extracellular-facing; sequence HVALMLRGQT…SLEPKKQAVH (71 aa).

The protein belongs to the DHHC palmitoyltransferase family.

Its subcellular location is the membrane. It catalyses the reaction L-cysteinyl-[protein] + hexadecanoyl-CoA = S-hexadecanoyl-L-cysteinyl-[protein] + CoA. Functionally, probable palmitoyltransferase that could catalyze the addition of palmitate onto various protein substrates. The protein is Probable palmitoyltransferase ZDHHC24 of Danio rerio (Zebrafish).